A 735-amino-acid polypeptide reads, in one-letter code: MTSTGKDGGGAQHAQYVGPYRLEKTLGKGQTGLVKLGIHCVTCQKVAIKIVNREKLSESVLMKVEREIAILKLIEHPHVLKLHDVYENKKYLYLVLEHVSGGELFDYLVKKGRLTPKEARKFFRQIISALDFCHSHSICHRDLKPENLLLDERNNIRIADFGMASLQVGDSLLETSCGSPHYACPEVIRGEKYDGRKADVWSCGVILFALLVGALPFDDDNLRQLLEKVKRGVFHMPHFIPPDCQSLLRGMIEVDAARRLTLEHIQKHIWYIGGKNEPEPEQPIPRKVQIRSLPSLEDIDPDVLDSMHSLGCFRDRNKLLQDLLSEEENQEKMIYFLLLDRKERYPSHEDEDLPPRNEIDPPRKRVDSPMLNRHGKRRPERKSMEVLSVTDGGSPVPARRAIEMAQHGQRSRSISGASSGLSTSPLSSPRVTPHPSPRGSPLPTPKGTPVHTPKESPAGTPNPTPPSSPSVGGVPWRTRLNSIKNSFLGSPRFHRRKLQVPTPEEMSNLTPESSPELGHLQLFGNPVSKVRSVAMELVILVQTLAYTSFRLLGTFLPVRYLRHSVLSRPPERARLVLRGAPCTHMGPVWNMVGMAYTQNPPIMGETGVYGSQWVMSSAPSKHYTSLGLSVPSPSCSLSPSLFPFCAPDTTNCMEVMTGRLSKCGTPLSNFFDVIKQLFSDEKNGQAAQAPSTPAKRSAHGPLGDSAAAGPGGDTEYPMGKDMAKMGPPAARREQP.

Residues 20-271 enclose the Protein kinase domain; the sequence is YRLEKTLGKG…LEHIQKHIWY (252 aa). ATP contacts are provided by residues 26-34 and Lys49; that span reads LGKGQTGLV. Asp142 functions as the Proton acceptor in the catalytic mechanism. Thr175 is subject to Phosphothreonine; by LKB1. Phosphothreonine; by PKA is present on Thr261. Ser295 is modified (phosphoserine). Positions 298–340 constitute a UBA domain; that stretch reads DIDPDVLDSMHSLGCFRDRNKLLQDLLSEEENQEKMIYFLLLD. Basic and acidic residues predominate over residues 346-367; the sequence is PSHEDEDLPPRNEIDPPRKRVD. 3 disordered regions span residues 346–476, 493–514, and 682–735; these read PSHE…GVPW, FHRR…PESS, and KNGQ…REQP. Ser368, Ser383, Ser394, Ser413, Ala417, Ser424, and Ser428 each carry phosphoserine. Residues 411 to 429 are compositionally biased toward low complexity; it reads SRSISGASSGLSTSPLSSP. Pro residues predominate over residues 432 to 446; that stretch reads TPHPSPRGSPLPTPK. A Phosphoserine modification is found at Ser456. Phosphothreonine is present on residues Thr460, Thr464, and Thr510. Phosphoserine occurs at positions 513 and 514.

The protein belongs to the protein kinase superfamily. CAMK Ser/Thr protein kinase family. SNF1 subfamily. Interacts with FZR1, a regulatory subunit of the APC ubiquitin ligase complex. Interacts with COPS5. Interacts with PAK1. Requires Mg(2+) as cofactor. May be phosphorylated at Thr-261 by PKA. Phosphorylated at Thr-175 by STK11/LKB1 in complex with STE20-related adapter-alpha (STRADA) pseudo kinase and CAB39. Not phosphorylated at Thr-175 by CaMKK2. In contrast, it is phosphorylated and activated by CaMKK1. May be inactivated via dephosphorylation of Thr-175 by PP2C. Post-translationally, polyubiquitinated by the APC complex in conjunction with FZR1, leading to its proteasomal degradation. Targeted for proteasomal degradation by interaction with COPS5. BRSK2 levels change during the cell cycle. BRSK2 levels are low at the G1/S boundary and gradually increase as cells progress into G2 phase. BRSK2 levels decrease rapidly at the end of mitosis.

The protein localises to the cytoplasm. Its subcellular location is the cytoskeleton. The protein resides in the microtubule organizing center. It localises to the centrosome. It is found in the perinuclear region. The protein localises to the endoplasmic reticulum. It catalyses the reaction L-seryl-[protein] + ATP = O-phospho-L-seryl-[protein] + ADP + H(+). The enzyme catalyses L-threonyl-[protein] + ATP = O-phospho-L-threonyl-[protein] + ADP + H(+). It carries out the reaction L-seryl-[tau protein] + ATP = O-phospho-L-seryl-[tau protein] + ADP + H(+). The catalysed reaction is L-threonyl-[tau protein] + ATP = O-phospho-L-threonyl-[tau protein] + ADP + H(+). Its activity is regulated as follows. Activated by phosphorylation on Thr-175 by STK11/LKB1. Serine/threonine-protein kinase that plays a key role in polarization of neurons and axonogenesis, cell cycle progress and insulin secretion. Phosphorylates CDK16, CDC25C, MAPT/TAU, PAK1 and WEE1. Following phosphorylation and activation by STK11/LKB1, acts as a key regulator of polarization of cortical neurons, probably by mediating phosphorylation of microtubule-associated proteins such as MAPT/TAU at 'Thr-523' and 'Ser-573'. Also regulates neuron polarization by mediating phosphorylation of WEE1 at 'Ser-642' in post-mitotic neurons, leading to down-regulate WEE1 activity in polarized neurons. Plays a role in the regulation of the mitotic cell cycle progress and the onset of mitosis. Plays a role in the regulation of insulin secretion in response to elevated glucose levels, probably via phosphorylation of CDK16 and PAK1. While BRSK2 phosphorylated at Thr-175 can inhibit insulin secretion, BRSK2 phosphorylated at Thr-261 can promote insulin secretion. Regulates reorganization of the actin cytoskeleton. May play a role in the apoptotic response triggered by endoplasmic reticulum (ER) stress. The chain is Serine/threonine-protein kinase BRSK2 (Brsk2) from Rattus norvegicus (Rat).